The following is a 264-amino-acid chain: MKVIKTLSIINFFIFVTFNIKNESKYSNTFINNAYNMSIRRSMANEGSNTNSVGANAPNADTIASGSQRSTNSASTSTTNNGESQTTTPTAADTIASGSQRSTNSASTSTTNNGESQTTTPTAADTPTATESISPSPPITTTESSKFWQCTNKTDGKGEESEKQNELNESTEEGPKAPQEPQTAENENPAAPENKGTGQHGHMHGSRNNHPQNTSDSQKECTDGNKENCGAATSLLSNSSNIASINKFVVLISATLVLSFAIFI.

An N-terminal signal peptide occupies residues 1-20 (MKVIKTLSIINFFIFVTFNI). Residues Asn22 and Asn36 are each glycosylated (N-linked (GlcNAc...) asparagine). Positions 44 to 190 (ANEGSNTNSV…PQTAENENPA (147 aa)) are polymorphic region. Positions 46-227 (EGSNTNSVGA…QKECTDGNKE (182 aa)) are disordered. Repeat copies occupy residues 60-91 (ADTI…TPTA) and 92-123 (ADTI…TPTA). Residues 60–123 (ADTIASGSQR…GESQTTTPTA (64 aa)) are 2 X 32 AA perfects repeats. The segment covering 70-81 (STNSASTSTTNN) has biased composition (low complexity). The segment covering 82 to 101 (GESQTTTPTAADTIASGSQR) has biased composition (polar residues). Residues 102 to 145 (STNSASTSTTNNGESQTTTPTAADTPTATESISPSPPITTTESS) show a composition bias toward low complexity. The span at 154–166 (TDGKGEESEKQNE) shows a compositional bias: basic and acidic residues. Asn213 carries N-linked (GlcNAc...) asparagine glycosylation. The span at 217–226 (SQKECTDGNK) shows a compositional bias: basic and acidic residues. Cys221 and Cys229 are oxidised to a cystine. N-linked (GlcNAc...) asparagine glycosylation occurs at Asn238. Residue Asn238 is the site of GPI-anchor amidated asparagine attachment. Residues 239–264 (SSNIASINKFVVLISATLVLSFAIFI) constitute a propeptide, removed in mature form.

The protein localises to the cell membrane. Its function is as follows. May play a role in the merozoite attachment to the erythrocyte. This chain is Merozoite surface protein 2, found in Plasmodium falciparum (isolate FC27 / Papua New Guinea).